The chain runs to 150 residues: Large ribosomal subunit protein bL9 (150 aa).

It belongs to the bacterial ribosomal protein bL9 family.

In terms of biological role, binds to the 23S rRNA. The protein is Large ribosomal subunit protein bL9 of Lactococcus lactis subsp. cremoris (strain SK11).